We begin with the raw amino-acid sequence, 871 residues long: MLFFDKNKRILKRYSKIVEKINQLDQSMRKKSNEEIVSLSSELKERVNSLEDADRNLVEAFALVREAARRTLGMRPFDVQVMGGIALHEGKVAEMKTGEGKTLAATMPVYLNALIGKGVHVVTVNDYLARRDALWMGPVYLLLGLRVGVINSLGKSYEVVWKDPSLVEKAIKENWSVWPQEFDGEILKEEQMNKEALNAFQVELKEISRKEAYMCDVTYGTNNEFGFDYLRDNLVLDYNDKVQRGHFYAIVDEADSVLIDEARTPLIISGPSKESPSTYRRFAQIAKKFVKDKDFTIDEKARTVILTEEGVAKAEKIIGVDNLYEPGNVSLLYHLINALKALHLFKKDVDYVVMNGEVIIVDEFTGRLLPGRRYSGGLHQAIEAKEGVPIKEESITYATITFQNYFRMYEKLAGMTGTAKTEENEFVQVYGMEVVVIPTHRPMIRKDHDDLVFRTQKEKYEKIVEEIEKRYKKGQPVLVGTTSIEKSELLSSMLKKKGIPHQVLNAKHHEKEAEIVAKAGQKGMVTIATNMAGRGTDIKLGPGVAELGGLCVIGTERHESRRIDNQLRGRAGRQGDPGESIFFLSLEDDLLRIFGGEQIGKVMKILKIEEGQPIQHPMLSKLIENIQKKVEGINFSIRKSLMEMDEVLDKQRSTIYSLRDQILLEKDYDEYLKQIFEDVIGTRVEEFCSGKNWDLEGLKNSLSFLPRDLFEFDGRRFESSEELYEYLFNRMWEEYQKKRQEIGEEYSKVIRFLMLRIIDEHWRRYLEEVEHVREAVQLRAYGQKDPIVEFKKETYLMFDEMMRRINDTIANYVLRVVKVTEKDEKEAKEELGKIRLVHEEFNLVNRAMRRAMEKGKKKGGSHGLGKIRVKR.

ATP-binding positions include Gln-80, 98–102 (GEGKT), and Asp-537. Positions 852-871 (MEKGKKKGGSHGLGKIRVKR) are disordered. The span at 855 to 871 (GKKKGGSHGLGKIRVKR) shows a compositional bias: basic residues.

It belongs to the SecA family. Monomer and homodimer. Part of the essential Sec protein translocation apparatus which comprises SecA, SecYEG and auxiliary proteins SecDF. Other proteins may also be involved.

Its subcellular location is the cell inner membrane. The protein resides in the cytoplasm. The catalysed reaction is ATP + H2O + cellular proteinSide 1 = ADP + phosphate + cellular proteinSide 2.. Functionally, part of the Sec protein translocase complex. Interacts with the SecYEG preprotein conducting channel. Has a central role in coupling the hydrolysis of ATP to the transfer of proteins into and across the cell membrane, serving as an ATP-driven molecular motor driving the stepwise translocation of polypeptide chains across the membrane. The polypeptide is Protein translocase subunit SecA (Thermotoga neapolitana (strain ATCC 49049 / DSM 4359 / NBRC 107923 / NS-E)).